The following is a 402-amino-acid chain: Beta sliding clamp (402 aa).

This sequence belongs to the beta sliding clamp family. Forms a ring-shaped head-to-tail homodimer around DNA which binds and tethers DNA polymerases and other proteins to the DNA. The DNA replisome complex has a single clamp-loading complex (3 tau and 1 each of delta, delta', psi and chi subunits) which binds 3 Pol III cores (1 core on the leading strand and 2 on the lagging strand) each with a beta sliding clamp dimer. Additional proteins in the replisome are other copies of gamma, psi and chi, Ssb, DNA helicase and RNA primase.

It is found in the cytoplasm. Functionally, confers DNA tethering and processivity to DNA polymerases and other proteins. Acts as a clamp, forming a ring around DNA (a reaction catalyzed by the clamp-loading complex) which diffuses in an ATP-independent manner freely and bidirectionally along dsDNA. Initially characterized for its ability to contact the catalytic subunit of DNA polymerase III (Pol III), a complex, multichain enzyme responsible for most of the replicative synthesis in bacteria; Pol III exhibits 3'-5' exonuclease proofreading activity. The beta chain is required for initiation of replication as well as for processivity of DNA replication. This is Beta sliding clamp (dnaN) from Mycobacterium bovis (strain ATCC BAA-935 / AF2122/97).